The following is a 408-amino-acid chain: Eukaryotic initiation factor 4A-II (408 aa).

Residues 1–22 (MSGGSADYNSREHGGPEGMDPD) form a disordered region. A Q motif motif is present at residues 34-62 (DNFDDMNLKESLLRGIYAYGFEKPSAIQQ). Residues 65–236 (IIPCIKGYDV…KKFMRDPIRI (172 aa)) form the Helicase ATP-binding domain. 77–84 (QAQSGTGK) contributes to the ATP binding site. T160 is modified (phosphothreonine). The short motif at 183 to 186 (LDEA) is the DEAD box element. Residues 247–408 (GIKQFYINVE…EMPMNVADLI (162 aa)) enclose the Helicase C-terminal domain.

Belongs to the DEAD box helicase family. eIF4A subfamily. In terms of assembly, eIF4F is a multi-subunit complex, the composition of which varies with external and internal environmental conditions. It is composed of at least EIF4A, EIF4E and EIF4G1/EIFFG3. Interacts with EIF4E. May interact with NOM1.

It catalyses the reaction ATP + H2O = ADP + phosphate + H(+). Functionally, ATP-dependent RNA helicase which is a subunit of the eIF4F complex involved in cap recognition and is required for mRNA binding to ribosome. In the current model of translation initiation, eIF4A unwinds RNA secondary structures in the 5'-UTR of mRNAs which is necessary to allow efficient binding of the small ribosomal subunit, and subsequent scanning for the initiator codon. This Macaca fascicularis (Crab-eating macaque) protein is Eukaryotic initiation factor 4A-II (EIF4A2).